Consider the following 258-residue polypeptide: Small ribosomal subunit protein uS2 (258 aa).

The protein belongs to the universal ribosomal protein uS2 family.

The protein is Small ribosomal subunit protein uS2 of Streptococcus suis (strain 05ZYH33).